The sequence spans 96 residues: UPF0235 protein VP2619 (96 aa).

This sequence belongs to the UPF0235 family.

The polypeptide is UPF0235 protein VP2619 (Vibrio parahaemolyticus serotype O3:K6 (strain RIMD 2210633)).